A 400-amino-acid chain; its full sequence is Phosphoglycerate kinase (400 aa).

Substrate-binding positions include 21–23, Arg-36, 59–62, Arg-119, and Arg-160; these read DFN and HLGR. ATP contacts are provided by residues Lys-211, Glu-329, and 356–359; that span reads GGDS.

It belongs to the phosphoglycerate kinase family. In terms of assembly, monomer.

The protein localises to the cytoplasm. It catalyses the reaction (2R)-3-phosphoglycerate + ATP = (2R)-3-phospho-glyceroyl phosphate + ADP. It participates in carbohydrate degradation; glycolysis; pyruvate from D-glyceraldehyde 3-phosphate: step 2/5. This is Phosphoglycerate kinase from Levilactobacillus brevis (strain ATCC 367 / BCRC 12310 / CIP 105137 / JCM 1170 / LMG 11437 / NCIMB 947 / NCTC 947) (Lactobacillus brevis).